The following is a 52-amino-acid chain: Small, acid-soluble spore protein K (52 aa).

Residues 1–52 (MGKQAEFWSESKNNSKIDGQPKAKSRFASKRPNGTINTHPQERMRAANQQEE) are disordered.

It belongs to the SspK family.

It localises to the spore core. The sequence is that of Small, acid-soluble spore protein K from Bacillus anthracis (strain A0248).